We begin with the raw amino-acid sequence, 349 residues long: Glycerol-3-phosphate dehydrogenase [NAD(P)+] (349 aa).

Residues Ser-31, Phe-32, Arg-52, Lys-53, and Lys-126 each coordinate NADPH. Positions 126, 154, and 156 each coordinate sn-glycerol 3-phosphate. Ala-158 serves as a coordination point for NADPH. Residues Lys-209, Asp-262, Ser-272, Arg-273, and Asn-274 each coordinate sn-glycerol 3-phosphate. Lys-209 functions as the Proton acceptor in the catalytic mechanism. Arg-273 serves as a coordination point for NADPH. The NADPH site is built by Val-297 and Glu-299.

This sequence belongs to the NAD-dependent glycerol-3-phosphate dehydrogenase family.

It is found in the cytoplasm. It catalyses the reaction sn-glycerol 3-phosphate + NAD(+) = dihydroxyacetone phosphate + NADH + H(+). The catalysed reaction is sn-glycerol 3-phosphate + NADP(+) = dihydroxyacetone phosphate + NADPH + H(+). It functions in the pathway membrane lipid metabolism; glycerophospholipid metabolism. In terms of biological role, catalyzes the reduction of the glycolytic intermediate dihydroxyacetone phosphate (DHAP) to sn-glycerol 3-phosphate (G3P), the key precursor for phospholipid synthesis. In Clostridium tetani (strain Massachusetts / E88), this protein is Glycerol-3-phosphate dehydrogenase [NAD(P)+].